A 667-amino-acid polypeptide reads, in one-letter code: Protein OS-9 (667 aa).

An N-terminal signal peptide occupies residues 1-25 (MAAETLLSSLLGLLLLGLLLPATLT). The 123-residue stretch at 108-230 (APCLLKTKDW…TIRTPRLCPH (123 aa)) folds into the MRH domain. An intrachain disulfide couples Cys-110 to Cys-123. A mannooligosaccharide derivative is bound by residues Trp-117, Trp-118, and Gln-130. Residue Asn-177 is glycosylated (N-linked (GlcNAc...) asparagine). 2 cysteine pairs are disulfide-bonded: Cys-181–Cys-216 and Cys-196–Cys-228. Residues Asp-182, Arg-188, Glu-212, and Tyr-218 each contribute to the a mannooligosaccharide derivative site. 3 disordered regions span residues 262–450 (QADS…SDRE), 506–541 (EKQS…EHRV), and 636–667 (ERQR…EFDF). Composition is skewed to basic and acidic residues over residues 263 to 279 (ADSK…RQDP), 304 to 328 (ENSK…KEET), and 396 to 408 (PSRE…KGDP). Residues 410 to 429 (QQNEVEEEEDDEDEDEDEDE) show a composition bias toward acidic residues. The segment covering 430–450 (RQLLGEFEKELEGILLPSDRE) has biased composition (basic and acidic residues). Basic residues predominate over residues 514-523 (KKHRKRRVVP). Basic and acidic residues predominate over residues 636–647 (ERQRQKELESNY).

The protein belongs to the OS-9 family. Component of the HRD1 complex, which comprises at least SYNV1/HRD1, DERL1/2, FAM8A1, HERPUD1/HERP, OS9, SEL1L and UBE2J1. FAM8A1 is stabilized by interaction with SYNV1, which prevents its proteasomal degradation. OS9 and UBE2J1 recruitment to the complex may be mediated by SEL1L. Through this complex, may interact with ERLEC1 and HSPA5. Interacts (via C-terminus) with CPNE6 (via second C2 domain); this interaction occurs in a calcium-dependent manner in vitro. Interacts with CREB3. Post-translationally, intramolecular disulfide bonds.

The protein resides in the endoplasmic reticulum lumen. Lectin component of the HRD1 complex, which functions in endoplasmic reticulum (ER) quality control and ER-associated degradation (ERAD). Specifically recognizes and binds improperly folded glycoproteins as well as hyperglycosylated proteins, retain them in the ER, and transfers them to the ubiquitination machinery and promote their degradation. Possible targets include TRPV4 as well as hyperglycosylated HSP90B1. In Bos taurus (Bovine), this protein is Protein OS-9 (OS9).